The following is a 550-amino-acid chain: CCR4-NOT transcription complex subunit 6-like-B (550 aa).

The required for interaction with cnot1, cnot3 and cnot7 stretch occupies residues 1–148 (MPKEKYDPPD…LYQEPDGMRK (148 aa)). LRR repeat units lie at residues 52–73 (HLTV…IAKL), 75–96 (NLVY…LGNV), 98–120 (SLRE…GRLF), and 121–143 (RLQT…YQEP). The nuclease domain stretch occupies residues 153-550 (MLDNLSVHPE…INGVHLPSRR (398 aa)). Glutamate 235 contributes to the Mg(2+) binding site. The substrate site is built by glutamate 235, glutamate 271, histidine 355, and proline 360. Mg(2+) is bound at residue aspartate 405. Catalysis depends on aspartate 405, which acts as the Proton donor/acceptor. Substrate-binding residues include asparagine 407, asparagine 474, and phenylalanine 479.

Belongs to the CCR4/nocturin family. Component of the CCR4-NOT complex. The cofactor is Mg(2+).

The protein localises to the cytoplasm. The protein resides in the nucleus. The enzyme catalyses Exonucleolytic cleavage of poly(A) to 5'-AMP.. In terms of biological role, poly(A) nuclease with 3'-5' RNase activity. Catalytic component of the CCR4-NOT complex which is one of the major cellular mRNA deadenylases and is linked to various cellular processes including bulk mRNA degradation, miRNA-mediated repression, translational repression during translational initiation and general transcription regulation. Additional complex functions may be a consequence of its influence on mRNA expression. This Xenopus laevis (African clawed frog) protein is CCR4-NOT transcription complex subunit 6-like-B (cnot6l-b).